A 238-amino-acid chain; its full sequence is Laccase-S (238 aa).

2 Plastocyanin-like domains span residues 4-87 (NVIA…YDPA) and 100-238 (HTII…IARY). N8 is a glycosylation site (N-linked (GlcNAc...) asparagine). The Cu cation site is built by H21, H23, H66, and H68. An intrachain disulfide couples C74 to C162. The N-linked (GlcNAc...) asparagine glycan is linked to N165.

It belongs to the multicopper oxidase family. Monomer. Requires Cu cation as cofactor.

It localises to the secreted. It catalyses the reaction 4 hydroquinone + O2 = 4 benzosemiquinone + 2 H2O. Its activity is regulated as follows. Activity is strongly promoted by toluene. Activity is promoted by magnesium, potassium, cadmium, zinc, nickel, sodium, lead and manganese ions. Completely inhibited by IAA (cysteine protease inhibitor), PMSF (serine protease inhibitor), DEP (histidine protease inhibitor) and NAI (tyrosine protease inhibitor). Inhibited by ethanol, acetone, SDS, and EDTA. Activity is strongly inhibited by mercury ions. Also inhibited by lithium, aluminum, calcium, barium and iron ions. In terms of biological role, lignin degradation and detoxification of lignin-derived products. Has activity towards 2,2'-azino-bis(3-ethylbenzothiazoline-6-sulfonic acid) (ABTS). The polypeptide is Laccase-S (Trametes hirsuta (White-rot fungus)).